A 347-amino-acid chain; its full sequence is Probable RNA methyltransferase azo0122 (347 aa).

The active-site Proton acceptor is E89. Positions 92–318 constitute a Radical SAM core domain; it reads LLLRDGLCVS…AKLRQSAGQD (227 aa). A disulfide bridge connects residues C99 and C323. [4Fe-4S] cluster contacts are provided by C106, C110, and C113. S-adenosyl-L-methionine-binding positions include 151 to 152, S181, 204 to 206, and N280; these read GE and SLH. Residue C323 is the S-methylcysteine intermediate of the active site.

Belongs to the radical SAM superfamily. RlmN family. [4Fe-4S] cluster is required as a cofactor.

It is found in the cytoplasm. The chain is Probable RNA methyltransferase azo0122 from Azoarcus sp. (strain BH72).